We begin with the raw amino-acid sequence, 156 residues long: Arginine repressor (156 aa).

This sequence belongs to the ArgR family.

Its subcellular location is the cytoplasm. It functions in the pathway amino-acid biosynthesis; L-arginine biosynthesis [regulation]. Functionally, regulates arginine biosynthesis genes. In Proteus mirabilis (strain HI4320), this protein is Arginine repressor.